The chain runs to 249 residues: GTP cyclohydrolase 1 type 2 homolog (249 aa).

H64, H65, D102, H217, and E221 together coordinate a divalent metal cation.

Belongs to the GTP cyclohydrolase I type 2/NIF3 family. Homohexamer.

The protein is GTP cyclohydrolase 1 type 2 homolog of Neisseria meningitidis serogroup B (strain ATCC BAA-335 / MC58).